The primary structure comprises 460 residues: tRNA modification GTPase MnmE (460 aa).

The (6S)-5-formyl-5,6,7,8-tetrahydrofolate site is built by Arg22, Glu87, and Arg126. The 160-residue stretch at 222-381 folds into the TrmE-type G domain; sequence GLKTAIIGKP…LENTIYNLVF (160 aa). Residue Asn232 coordinates K(+). Residues 232–237, 251–257, and 276–279 contribute to the GTP site; these read NVGKSS, TDIPGTT, and DTAG. Position 236 (Ser236) interacts with Mg(2+). Thr251, Ile253, and Thr256 together coordinate K(+). Thr257 is a binding site for Mg(2+). Lys460 lines the (6S)-5-formyl-5,6,7,8-tetrahydrofolate pocket.

The protein belongs to the TRAFAC class TrmE-Era-EngA-EngB-Septin-like GTPase superfamily. TrmE GTPase family. Homodimer. Heterotetramer of two MnmE and two MnmG subunits. It depends on K(+) as a cofactor.

Its subcellular location is the cytoplasm. Exhibits a very high intrinsic GTPase hydrolysis rate. Involved in the addition of a carboxymethylaminomethyl (cmnm) group at the wobble position (U34) of certain tRNAs, forming tRNA-cmnm(5)s(2)U34. The polypeptide is tRNA modification GTPase MnmE (Thermoanaerobacter sp. (strain X514)).